The chain runs to 216 residues: 3-keto-L-gulonate-6-phosphate decarboxylase UlaD (216 aa).

Aspartate 11 contributes to the substrate binding site. Glutamate 33 and aspartate 62 together coordinate Mg(2+). Position 192 (arginine 192) interacts with substrate.

Belongs to the HPS/KGPDC family. KGPDC subfamily. In terms of assembly, homodimer. Requires Mg(2+) as cofactor.

It carries out the reaction 3-dehydro-L-gulonate 6-phosphate + H(+) = L-xylulose 5-phosphate + CO2. The protein operates within cofactor degradation; L-ascorbate degradation; D-xylulose 5-phosphate from L-ascorbate: step 2/4. Catalyzes the decarboxylation of 3-keto-L-gulonate-6-P into L-xylulose-5-P. Is involved in the anaerobic L-ascorbate utilization. The chain is 3-keto-L-gulonate-6-phosphate decarboxylase UlaD from Shigella dysenteriae serotype 1 (strain Sd197).